A 504-amino-acid polypeptide reads, in one-letter code: Histidine ammonia-lyase (504 aa).

A cross-link (5-imidazolinone (Ala-Gly)) is located at residues 141 to 143 (ASG). Ser-142 bears the 2,3-didehydroalanine (Ser) mark.

The protein belongs to the PAL/histidase family. Contains an active site 4-methylidene-imidazol-5-one (MIO), which is formed autocatalytically by cyclization and dehydration of residues Ala-Ser-Gly.

The protein localises to the cytoplasm. It catalyses the reaction L-histidine = trans-urocanate + NH4(+). It functions in the pathway amino-acid degradation; L-histidine degradation into L-glutamate; N-formimidoyl-L-glutamate from L-histidine: step 1/3. This is Histidine ammonia-lyase from Geobacillus kaustophilus (strain HTA426).